The following is a 291-amino-acid chain: ATP synthase gamma chain (291 aa).

This sequence belongs to the ATPase gamma chain family. F-type ATPases have 2 components, CF(1) - the catalytic core - and CF(0) - the membrane proton channel. CF(1) has five subunits: alpha(3), beta(3), gamma(1), delta(1), epsilon(1). CF(0) has three main subunits: a, b and c.

Its subcellular location is the cell inner membrane. Its function is as follows. Produces ATP from ADP in the presence of a proton gradient across the membrane. The gamma chain is believed to be important in regulating ATPase activity and the flow of protons through the CF(0) complex. The protein is ATP synthase gamma chain of Methylibium petroleiphilum (strain ATCC BAA-1232 / LMG 22953 / PM1).